The chain runs to 619 residues: Thiohydroximate-O-sulfate sulfur/sulfate-lyase (nitrile-forming) NSP4 (619 aa).

2 consecutive Jacalin-type lectin domains span residues 2–142 (AQKV…YFAP) and 151–292 (AKKL…YISL). 5 Kelch repeats span residues 326 to 374 (KIYS…VCMV), 379 to 425 (TLYV…SMAA), 429 to 478 (NVYV…VVQG), 480 to 524 (VWVV…ASAA), and 528 to 583 (HIVI…GWTA). The active-site Proton donor is R386. R386, S419, R441, G470, and V519 together coordinate a (Z)-N-(sulfonatooxy)alkanimidothioate. The Proton donor role is filled by R441. 3 residues coordinate Fe(2+): E535, D539, and H543. W581 is an a (Z)-N-(sulfonatooxy)alkanimidothioate binding site.

The protein belongs to the jacalin lectin family. Requires Fe(2+) as cofactor. In terms of tissue distribution, mainly expressed in roots, and, to a lower extent, in seedlings and leaves. Observed in seeds.

It carries out the reaction a (Z)-N-(sulfonatooxy)alkanimidothioate = a nitrile + sulfur + sulfate. The catalysed reaction is (Z)-phenyl-N-(sulfonatooxy)methanimidothioate = phenylacetonitrile + sulfur + sulfate. The enzyme catalyses (Z)-N-(sulfonatooxy)prop-2-enimidothioate = but-3-enenitrile + sulfur + sulfate. In terms of biological role, specifier protein that contributes to constitutive and herbivore-induced simple nitrile formation. Promotes simple nitriles, but not epithionitrile or thiocyanate formation. Converts allylglucosinolate and benzylglucosinolate (glucotropaeolin) to their corresponding simple nitriles in the presence of myrosinase. This Arabidopsis thaliana (Mouse-ear cress) protein is Thiohydroximate-O-sulfate sulfur/sulfate-lyase (nitrile-forming) NSP4.